The chain runs to 83 residues: Small ribosomal subunit protein bS16 (83 aa).

This sequence belongs to the bacterial ribosomal protein bS16 family.

This Stutzerimonas stutzeri (strain A1501) (Pseudomonas stutzeri) protein is Small ribosomal subunit protein bS16.